Here is a 258-residue protein sequence, read N- to C-terminus: Imidazole glycerol phosphate synthase subunit HisF (258 aa).

Active-site residues include D11 and D130.

This sequence belongs to the HisA/HisF family. Heterodimer of HisH and HisF.

It is found in the cytoplasm. It carries out the reaction 5-[(5-phospho-1-deoxy-D-ribulos-1-ylimino)methylamino]-1-(5-phospho-beta-D-ribosyl)imidazole-4-carboxamide + L-glutamine = D-erythro-1-(imidazol-4-yl)glycerol 3-phosphate + 5-amino-1-(5-phospho-beta-D-ribosyl)imidazole-4-carboxamide + L-glutamate + H(+). The protein operates within amino-acid biosynthesis; L-histidine biosynthesis; L-histidine from 5-phospho-alpha-D-ribose 1-diphosphate: step 5/9. Functionally, IGPS catalyzes the conversion of PRFAR and glutamine to IGP, AICAR and glutamate. The HisF subunit catalyzes the cyclization activity that produces IGP and AICAR from PRFAR using the ammonia provided by the HisH subunit. This is Imidazole glycerol phosphate synthase subunit HisF from Methylorubrum extorquens (strain PA1) (Methylobacterium extorquens).